The chain runs to 312 residues: Cytochrome f (312 aa).

The signal sequence occupies residues Met-1–Ala-28. Residues Tyr-29, Cys-49, Cys-52, and His-53 each contribute to the heme site. The chain crosses the membrane as a helical span at residues Val-278–Lys-298.

This sequence belongs to the cytochrome f family. The 4 large subunits of the cytochrome b6-f complex are cytochrome b6, subunit IV (17 kDa polypeptide, petD), cytochrome f and the Rieske protein, while the 4 small subunits are PetG, PetL, PetM and PetN. The complex functions as a dimer. Requires heme as cofactor.

The protein localises to the plastid. It localises to the chloroplast thylakoid membrane. Its function is as follows. Component of the cytochrome b6-f complex, which mediates electron transfer between photosystem II (PSII) and photosystem I (PSI), cyclic electron flow around PSI, and state transitions. The chain is Cytochrome f from Emiliania huxleyi (Coccolithophore).